The primary structure comprises 207 residues: Putative threonylcarbamoyl-AMP synthase (207 aa).

Positions 15-199 (EEERKKVLEF…KIISIREGVI (185 aa)) constitute a YrdC-like domain.

Belongs to the SUA5 family.

The protein localises to the cytoplasm. The enzyme catalyses L-threonine + hydrogencarbonate + ATP = L-threonylcarbamoyladenylate + diphosphate + H2O. Functionally, required for the formation of a threonylcarbamoyl group on adenosine at position 37 (t(6)A37) in tRNAs that read codons beginning with adenine. Catalyzes the conversion of L-threonine, HCO(3)(-)/CO(2) and ATP to give threonylcarbamoyl-AMP (TC-AMP) as the acyladenylate intermediate, with the release of diphosphate. The chain is Putative threonylcarbamoyl-AMP synthase from Methanocaldococcus jannaschii (strain ATCC 43067 / DSM 2661 / JAL-1 / JCM 10045 / NBRC 100440) (Methanococcus jannaschii).